Consider the following 52-residue polypeptide: Light-harvesting protein B800/830/1020 alpha-1 chain (52 aa).

Over 1 to 12 (MWRIWKVFDPRR) the chain is Cytoplasmic. A helical membrane pass occupies residues 13–33 (ILIATAIWLIIIALTIHVILM). Histidine 29 serves as a coordination point for a bacteriochlorophyll. Topologically, residues 34–52 (TTERFNWLEGAPAAEYYSS) are periplasmic.

It belongs to the antenna complex alpha subunit family. The core complex is formed by different alpha and beta chains, binding bacteriochlorophyll molecules, and arranged most probably in tetrameric structures disposed around the reaction center. The non-pigmented gamma chains may constitute additional components.

It localises to the cell inner membrane. In terms of biological role, antenna complexes are light-harvesting systems, which transfer the excitation energy to the reaction centers. The polypeptide is Light-harvesting protein B800/830/1020 alpha-1 chain (Halorhodospira halochloris (Ectothiorhodospira halochloris)).